An 846-amino-acid chain; its full sequence is Selenocysteine insertion sequence-binding protein 2 (846 aa).

Composition is skewed to basic and acidic residues over residues 151 to 165 (RRAW…RRAD) and 206 to 215 (PEFEFSRLDF). Disordered stretches follow at residues 151–246 (RRAW…SNMS), 266–288 (TDHT…TREL), 321–440 (TTSS…VPVQ), 448–467 (AALE…RPVV), and 475–613 (VLSK…DSAT). Residue S220 is modified to Phosphoserine. Composition is skewed to polar residues over residues 220-232 (SPKN…TQKQ), 272-288 (AVTN…TREL), and 321-342 (TTSS…SDPS). A Nuclear localization signal motif is present at residues 370-380 (KKNKKKKEKSK). Residues 417-428 (KLQSKQQAQNDF) are compositionally biased toward polar residues. A compositionally biased stretch (basic and acidic residues) spans 527–536 (ILKERQERMQ). Residues 542–551 (SAVSPTVASD) are compositionally biased toward polar residues. Residues 666 to 687 (LVLGLREVLKHLKLRKLKCIII) are RNA-binding. Residues 774-804 (RQEQAGEPGPQTPPSPPMQDPIQSTDEGTLA) are disordered. Residues 783–792 (PQTPPSPPMQ) show a composition bias toward pro residues.

As to expression, ubiquitous.

It is found in the cytoplasm. The protein localises to the nucleus. In terms of biological role, mRNA-binding protein that binds to the SECIS (selenocysteine insertion sequence) element present in the 3'-UTR of mRNAs encoding selenoproteins and facilitates the incorporation of the rare amino acid selenocysteine. Insertion of selenocysteine at UGA codons is mediated by SECISBP2 and EEFSEC: SECISBP2 (1) specifically binds the SECIS sequence once the 80S ribosome encounters an in-frame UGA codon and (2) contacts the RPS27A/eS31 of the 40S ribosome before ribosome stalling. (3) GTP-bound EEFSEC then delivers selenocysteinyl-tRNA(Sec) to the 80S ribosome and adopts a preaccommodated state conformation. (4) After GTP hydrolysis, EEFSEC dissociates from the assembly, selenocysteinyl-tRNA(Sec) accommodates, and peptide bond synthesis and selenoprotein elongation occur. The protein is Selenocysteine insertion sequence-binding protein 2 (Secisbp2) of Rattus norvegicus (Rat).